Here is a 394-residue protein sequence, read N- to C-terminus: MNNSNRIRLTWISYLSYALTGALVIVTGIVMGNIAEYFNLPIASMSNTFTFLNAGILISIFLNAWLMEIIPLKRQLVFGFILMLIAIAGLMVGHNLMIFSISMFIFGVVSGITMSIGTFLVTHMYEGRQRGSRLLFTDSFFSMAGMIFPIAAAMLLARHIEWYWVYACIGLLYVGIFVLTLCSEFPVLGHKATDQSKPVVKEKWGVGVLFLAIAALCYILGQLGFIQWVPEYATKTFNMNISQAGQLVSNFWISYMIGMWIFSFILRFFDLQRIVTVLAAMATLAMYLFVSTDNPAYLSYYILALGFVSSAIYTTLITLGSLQTKVSSPKLVNFILTCGTVGTMLTFVVTGPIVANNGVHAALETANGLYLAVFILCLALGFFTKHRSHGHVTH.

A run of 12 helical transmembrane segments spans residues 11-31, 51-71, 76-96, 101-121, 134-154, 162-182, 206-226, 246-266, 274-294, 302-322, 334-354, and 363-383; these read WISY…GIVM, FLNA…EIIP, LVFG…GHNL, ISMF…TFLV, LLFT…AAAM, WYWV…LTLC, VGVL…LGFI, QLVS…SFIL, IVTV…STDN, ILAL…LGSL, FILT…GPIV, and LETA…LGFF.

The protein belongs to the major facilitator superfamily. TsgA family.

The protein localises to the cell inner membrane. This is Protein TsgA homolog from Yersinia pestis bv. Antiqua (strain Antiqua).